The primary structure comprises 355 residues: Uroporphyrinogen decarboxylase (355 aa).

Residues 38 to 42, Asp-87, Tyr-162, Ser-217, and His-331 each bind substrate; that span reads RQAGR.

Belongs to the uroporphyrinogen decarboxylase family. Homodimer.

It localises to the cytoplasm. It catalyses the reaction uroporphyrinogen III + 4 H(+) = coproporphyrinogen III + 4 CO2. It functions in the pathway porphyrin-containing compound metabolism; protoporphyrin-IX biosynthesis; coproporphyrinogen-III from 5-aminolevulinate: step 4/4. In terms of biological role, catalyzes the decarboxylation of four acetate groups of uroporphyrinogen-III to yield coproporphyrinogen-III. The polypeptide is Uroporphyrinogen decarboxylase (Streptomyces avermitilis (strain ATCC 31267 / DSM 46492 / JCM 5070 / NBRC 14893 / NCIMB 12804 / NRRL 8165 / MA-4680)).